A 1167-amino-acid polypeptide reads, in one-letter code: DNA-directed RNA polymerase subunit beta (1167 aa).

Belongs to the RNA polymerase beta chain family. The RNAP catalytic core consists of 2 alpha, 1 beta, 1 beta' and 1 omega subunit. When a sigma factor is associated with the core the holoenzyme is formed, which can initiate transcription.

It carries out the reaction RNA(n) + a ribonucleoside 5'-triphosphate = RNA(n+1) + diphosphate. DNA-dependent RNA polymerase catalyzes the transcription of DNA into RNA using the four ribonucleoside triphosphates as substrates. This chain is DNA-directed RNA polymerase subunit beta, found in Mycolicibacterium vanbaalenii (strain DSM 7251 / JCM 13017 / BCRC 16820 / KCTC 9966 / NRRL B-24157 / PYR-1) (Mycobacterium vanbaalenii).